The following is a 671-amino-acid chain: DNA polymerase kappa (671 aa).

The UmuC domain occupies 105–285 (WLHVDMDAFY…LPVRKIGGIG (181 aa)). Mg(2+)-binding residues include aspartate 109 and aspartate 200. Residue glutamate 201 is part of the active site. The segment at 576–613 (YWIDGYKCVLCGIELPPSFVEERQEHSDFHLAQRLQNE) adopts a UBZ3-type zinc-finger fold. Zn(2+)-binding residues include cysteine 583, cysteine 586, histidine 601, and histidine 605. The interval 607–671 (AQRLQNEETG…NQNSNETQRK (65 aa)) is disordered. The Nuclear localization signal motif lies at 625–632 (KRRILGKE). Positions 629–650 (LGKEKVNSKPKKQKPDQKDSSK) are enriched in basic and acidic residues. Polar residues predominate over residues 659-671 (TKSNQNSNETQRK).

It belongs to the DNA polymerase type-Y family. Mg(2+) is required as a cofactor. Expressed in roots, leaves, stems, flowers and siliques. Present in endoreduplicating cells.

It is found in the nucleus. The enzyme catalyses DNA(n) + a 2'-deoxyribonucleoside 5'-triphosphate = DNA(n+1) + diphosphate. With respect to regulation, unable to bypass a single 1,N(6)-ethenoadenine (epsilon-dA) or an abasic site lesions in DNA templates. In terms of biological role, template-directed low-fidelity DNA polymerase specifically involved in DNA repair. Able to extend primer-terminal mispairs, and to insert nucleotides opposite to a single 7,8-dihydro-8-oxoGuanine (8-oxoG) lesion and moderately extend from the resulting primer end, thus leading to both error-free and error-prone bypass of 8-oxoG DNA lesions. Probably involved in consecutive DNA replication cycles in the absence of mitosis. Binds preferentially template-primer DNA substrates or single-stranded DNA. Plays an important role in translesion synthesis, where the normal high-fidelity DNA polymerases cannot proceed and DNA synthesis stalls. Depending on the context, it inserts the correct base, but causes frequent base transitions, transversions and frameshifts. This Arabidopsis thaliana (Mouse-ear cress) protein is DNA polymerase kappa.